Reading from the N-terminus, the 356-residue chain is Glutamine synthetase cytosolic isozyme 1-1 (356 aa).

The 81-residue stretch at Ile19–Gly99 folds into the GS beta-grasp domain. Residues Lys106–Pro356 form the GS catalytic domain.

This sequence belongs to the glutamine synthetase family. In terms of assembly, homooctamer. As to expression, highly expressed in leaf blades, at intermediate levels in spikelets (rice flower) and at lower levels in roots.

It localises to the cytoplasm. The enzyme catalyses L-glutamate + NH4(+) + ATP = L-glutamine + ADP + phosphate + H(+). Functionally, high-affinity glutamine synthetase involved in ammonium assimilation. Seems to be a major component of the cytosolic glutamine synthetic pathway in leaf blades. Plays an important role in maintaining carbon and nitrogen metabolic balance during ammonium assimilation in shoots and roots, thus controlling plant growth and development. Plays an important role in maintaining broad range of metabolites and transcripts involved in the maintenance of plant metabolic homeostasis and development of plastid in roots. The protein is Glutamine synthetase cytosolic isozyme 1-1 of Oryza sativa subsp. japonica (Rice).